The primary structure comprises 254 residues: tRNA pseudouridine synthase A (254 aa).

The active-site Nucleophile is Asp52. Tyr111 contacts substrate.

Belongs to the tRNA pseudouridine synthase TruA family. Homodimer.

The catalysed reaction is uridine(38/39/40) in tRNA = pseudouridine(38/39/40) in tRNA. Formation of pseudouridine at positions 38, 39 and 40 in the anticodon stem and loop of transfer RNAs. The chain is tRNA pseudouridine synthase A from Methylobacterium nodulans (strain LMG 21967 / CNCM I-2342 / ORS 2060).